The chain runs to 420 residues: D-tagatose-1,6-bisphosphate aldolase subunit GatZ (420 aa).

The protein belongs to the GatZ/KbaZ family. GatZ subfamily. In terms of assembly, forms a complex with GatY.

It participates in carbohydrate metabolism; D-tagatose 6-phosphate degradation; D-glyceraldehyde 3-phosphate and glycerone phosphate from D-tagatose 6-phosphate: step 2/2. Functionally, component of the tagatose-1,6-bisphosphate aldolase GatYZ that is required for full activity and stability of the Y subunit. Could have a chaperone-like function for the proper and stable folding of GatY. When expressed alone, GatZ does not show any aldolase activity. Is involved in the catabolism of galactitol. The protein is D-tagatose-1,6-bisphosphate aldolase subunit GatZ of Escherichia coli O7:K1 (strain IAI39 / ExPEC).